The sequence spans 507 residues: F-box only protein 31 (507 aa).

The disordered stretch occupies residues 19 to 42 (RQQRRGPAETAAADSEADTDPEEE). A Phosphoserine modification is found at Ser-33. Residues 33-42 (SEADTDPEEE) are compositionally biased toward acidic residues. Thr-37 is modified (phosphothreonine). The D box signature appears at 50–55 (RCSLLE). One can recognise an F-box domain in the interval 50-96 (RCSLLELPPELLVEIFASLPGTDLPSLAQVCSRFRRILHTDTIWRRR). Residues Cys-192, His-200, Cys-216, and His-222 each coordinate Zn(2+). Ser-264 carries the phosphoserine; by ATM modification. Positions 283–285 (DDL) match the DDL motif motif. The disordered stretch occupies residues 364–421 (RQEQEAGEGPAPHREPAVKDPEGPPAKASKEAGPGAEAAEQSSTSGQGQPFVLPAGVS). The segment covering 374 to 385 (APHREPAVKDPE) has biased composition (basic and acidic residues). A Phosphoserine modification is found at Ser-448.

The protein belongs to the FBXO31 family. As to quaternary structure, part of a SCF (SKP1-cullin-F-box) protein ligase complex SCF(FBXO31) composed of CUL1, SKP1, RBX1 and FBXO31. Interacts (when phosphorylated at Ser-33) with CDC20, promoting ubiquitination by the APC/C complex. Post-translationally, phosphorylation at Ser-264 by ATM following gamma-irradiation results in its stabilization. Phosphorylation at Ser-448 in absence of stress promotes its ubiquitination and degradation by the SCF(FBXO46) complex. Phosphorylation at Ser-33 by AKT1 promotes association with CDC20 and ubiquitination by the APC/C complex. Ubiquitinated by the SCF(FBXO46) complex in absence of stress, promoting its degradation. Ubiquitinated by the APC/C complex following phosphorylation at Ser-33, leading to its degradation by the proteasome.

It localises to the cytoplasm. The protein resides in the cytoskeleton. The protein localises to the microtubule organizing center. It is found in the centrosome. It functions in the pathway protein modification; protein ubiquitination. Substrate-recognition component of the SCF(FBXO31) protein ligase complex, which specifically mediates the ubiquitination of proteins amidated at their C-terminus in response to oxidative stress, leading to their degradation by the proteasome. FBXO31 specifically recognizes and binds C-terminal peptides bearing an amide: C-terminal amidation in response to oxidative stress takes place following protein fragmentation. The SCF(FBXO31) also plays a role in G1 arrest following DNA damage by mediating ubiquitination of phosphorylated cyclin-D1 (CCND1), promoting its degradation by the proteasome, resulting in G1 arrest. The SCF(FBXO31) complex is however not a major regulator of CCND1 stability during the G1/S transition. In response to genotoxic stress, the SCF(FBXO31) complex directs ubiquitination and degradation of phosphorylated MDM2, thereby promoting p53/TP53-mediated DNA damage response. SCF(FBXO31) complex is required for genomic integrity by catalyzing ubiquitination and degradation of cyclin-A (CCNA1 and/or CCNA2) during the G1 phase. In response to genotoxic stress, the SCF(FBXO31) complex directs ubiquitination and degradation of phosphorylated FBXO46 and MAP2K6. SCF(FBXO31) complex promotes ubiquitination and degradation of CDT1 during the G2 phase to prevent re-replication. The SCF(FBXO31) complex also mediates ubiquitination and degradation of DUSP6, OGT and PARD6A. In Rattus norvegicus (Rat), this protein is F-box only protein 31.